A 79-amino-acid polypeptide reads, in one-letter code: DNA-directed RNA polymerase subunit omega (79 aa).

The protein belongs to the RNA polymerase subunit omega family. As to quaternary structure, the RNAP catalytic core consists of 2 alpha, 1 beta, 1 beta' and 1 omega subunit. When a sigma factor is associated with the core the holoenzyme is formed, which can initiate transcription.

The enzyme catalyses RNA(n) + a ribonucleoside 5'-triphosphate = RNA(n+1) + diphosphate. Promotes RNA polymerase assembly. Latches the N- and C-terminal regions of the beta' subunit thereby facilitating its interaction with the beta and alpha subunits. The protein is DNA-directed RNA polymerase subunit omega of Bdellovibrio bacteriovorus (strain ATCC 15356 / DSM 50701 / NCIMB 9529 / HD100).